Consider the following 130-residue polypeptide: MSMQDPVADMLTRIRNGQLANKYSVKMPSSKLKKSIIQLLKEEGYIKDYNVTGDTKLELEVFLKYFQGKSVVDMIQRISRPSLRIYKNKNNLPKVMSGLGIAVISTSKGVMTDRMARQEGLGGEVICYVA.

Belongs to the universal ribosomal protein uS8 family. In terms of assembly, part of the 30S ribosomal subunit. Contacts proteins S5 and S12.

One of the primary rRNA binding proteins, it binds directly to 16S rRNA central domain where it helps coordinate assembly of the platform of the 30S subunit. The protein is Small ribosomal subunit protein uS8 of Buchnera aphidicola subsp. Acyrthosiphon pisum (strain 5A).